The sequence spans 614 residues: UvrABC system protein C (614 aa).

The GIY-YIG domain occupies 20–98 (TAPGVYRMYA…IKSLSPRYNV (79 aa)). The UVR domain maps to 207–242 (DELTRELGEQMQAASEALEFEQAARLRDLISSLRSM).

It belongs to the UvrC family. In terms of assembly, interacts with UvrB in an incision complex.

The protein resides in the cytoplasm. In terms of biological role, the UvrABC repair system catalyzes the recognition and processing of DNA lesions. UvrC both incises the 5' and 3' sides of the lesion. The N-terminal half is responsible for the 3' incision and the C-terminal half is responsible for the 5' incision. This is UvrABC system protein C from Stenotrophomonas maltophilia (strain K279a).